The following is a 603-amino-acid chain: Adenine deaminase (603 aa).

The protein belongs to the metallo-dependent hydrolases superfamily. Adenine deaminase family. In terms of assembly, homodimer. The cofactor is Mn(2+).

The enzyme catalyses adenine + H2O + H(+) = hypoxanthine + NH4(+). In Klebsiella pneumoniae subsp. pneumoniae (strain ATCC 700721 / MGH 78578), this protein is Adenine deaminase.